The following is a 199-amino-acid chain: Inducible T-cell costimulator (199 aa).

The N-terminal stretch at 1–20 (MKSGLWYFFLFCLRIKVLTG) is a signal peptide. Topologically, residues 21 to 140 (EINGSANYEM…YESQLCCQLK (120 aa)) are extracellular. The 103-residue stretch at 30 to 132 (MFIFHNGGVQ…LTGGYLHIYE (103 aa)) folds into the Ig-like V-type domain. Intrachain disulfides connect C42–C109 and C63–C83. Residues N89 and N110 are each glycosylated (N-linked (GlcNAc...) asparagine). A helical membrane pass occupies residues 141–161 (FWLPIGCAAFVVVCILGCILI). The Cytoplasmic portion of the chain corresponds to 162-199 (CWLTKKKYSSSVHDPNGEYMFMRAVNTAKKSRLTDVTL).

Homodimer; disulfide-linked. Interacts with ICOSLG. Interacts with PIK3R1. Interacts with TBK1; this interaction is critical for the maturation of T follicular regulatory cells. In terms of processing, N-glycosylated. As to expression, activated T-cells. Highly expressed on tonsillar T-cells, which are closely associated with B-cells in the apical light zone of germinal centers, the site of terminal B-cell maturation. Expressed at lower levels in thymus, lung, lymph node and peripheral blood leukocytes. Expressed in the medulla of fetal and newborn thymus.

It is found in the cell membrane. Its subcellular location is the secreted. Functionally, stimulatory receptor expressed in activated or antigen-experienced T-cells that plays an important role in the immune response. Upon binding to its ligand ICOSL expressed on antigen presenting cells (APCs), delivers costimulatory signals that enhances all basic T-cell responses to a foreign antigen, namely proliferation, secretion of lymphokines including IL10, up-regulation of molecules that mediate cell-cell interaction, and effective help for antibody secretion by B-cells. Also acts as a costimulatory receptor critical for the differentiation of T follicular regulatory cells upon immune challenges such as viral infection. Mechanistically, potentiates TCR-induced calcium flux by augmenting PLCG1 activation and actin remodeling. In addition, activates PI3K signaling pathways independently of calcium flux. Essential both for efficient interaction between T and B-cells and for normal antibody responses to T-cell dependent antigens. Prevents the apoptosis of pre-activated T-cells. Plays a critical role in CD40-mediated class switching of immunoglobin isotypes. The polypeptide is Inducible T-cell costimulator (ICOS) (Homo sapiens (Human)).